Here is a 350-residue protein sequence, read N- to C-terminus: Protein-glutamate methylesterase/protein-glutamine glutaminase (350 aa).

A Response regulatory domain is found at 5–122 (KVLCVDDSAL…RDGLIEYSEV (118 aa)). Position 56 is a 4-aspartylphosphate (aspartate 56). One can recognise a CheB-type methylesterase domain in the interval 152–346 (PFASSEKLVI…ERILTRLGDR (195 aa)). Catalysis depends on residues serine 165, histidine 191, and aspartate 288.

This sequence belongs to the CheB family. Phosphorylated by CheA. Phosphorylation of the N-terminal regulatory domain activates the methylesterase activity.

The protein resides in the cytoplasm. The catalysed reaction is [protein]-L-glutamate 5-O-methyl ester + H2O = L-glutamyl-[protein] + methanol + H(+). The enzyme catalyses L-glutaminyl-[protein] + H2O = L-glutamyl-[protein] + NH4(+). Involved in chemotaxis. Part of a chemotaxis signal transduction system that modulates chemotaxis in response to various stimuli. Catalyzes the demethylation of specific methylglutamate residues introduced into the chemoreceptors (methyl-accepting chemotaxis proteins or MCP) by CheR. Also mediates the irreversible deamidation of specific glutamine residues to glutamic acid. This Bordetella pertussis (strain Tohama I / ATCC BAA-589 / NCTC 13251) protein is Protein-glutamate methylesterase/protein-glutamine glutaminase.